The chain runs to 662 residues: Acyl-coenzyme A oxidase acox-1.4 (662 aa).

FAD-binding positions include 148–151 (YAQT), 156–157 (GT), and Gly-190. Substrate contacts are provided by residues 284–287 (KVNH) and Arg-294. Residues Arg-319 and 339–342 (QQHR) each bind FAD. ATP-binding residues include His-341, Ser-391, His-395, and Gln-403. Gly-410 is an FAD binding site. 432-433 (YE) contacts substrate. Glu-433 functions as the Proton acceptor in the catalytic mechanism. Glu-435 is an FAD binding site. ATP contacts are provided by residues 526–529 (RASR) and Tyr-574. The Microbody targeting signal signature appears at 660–662 (AKL).

The protein belongs to the acyl-CoA oxidase family. In terms of assembly, homodimer. FAD is required as a cofactor.

It is found in the peroxisome. The catalysed reaction is asc-C9-CoA + O2 = asc-DeltaC9-CoA + H2O2. It participates in lipid metabolism; peroxisomal fatty acid beta-oxidation. With respect to regulation, activated by ATP. ATP binding leads to a conformational change that promotes FAD cofactor binding and enzyme activity. ATP binding likely occurs during acox-1.4 folding and/or dimer formation. Involved in the first step of peroxisomal beta-oxidation by catalyzing the desaturation of fatty acid-derived side chains of ascaroside pheromones, which regulates development and behavior. Specifically, shortens ascarosides with a 9-carbon side chain (asc-C9) and, in association with acox-1.1, may contribute to the shortening of ascarosides with a 11-carbon side chain (asc-C11). May contribute to the production of indol-3-carbonyl(IC)-ascarosides in association with acox-1.1 and acox-3. The protein is Acyl-coenzyme A oxidase acox-1.4 of Caenorhabditis elegans.